Reading from the N-terminus, the 410-residue chain is Translation initiation factor 2 subunit gamma (410 aa).

One can recognise a tr-type G domain in the interval 6 to 203; the sequence is QSEVNIGMVG…AIQEFIPTPE (198 aa). The segment at 15–22 is G1; sequence GHVDHGKT. Asp18, Thr22, Gly43, and Ser45 together coordinate Mg(2+). 18–23 lines the GTP pocket; that stretch reads DHGKTS. The interval 43–47 is G2; sequence GISIR. Residues Cys58, Cys61, Cys73, and Cys76 each contribute to the Zn(2+) site. The segment at 90–93 is G3; that stretch reads DAPG. GTP-binding positions include 146–149 and 181–183; these read NKID and SAH. The G4 stretch occupies residues 146–149; the sequence is NKID. A G5 region spans residues 181 to 183; sequence SAH.

The protein belongs to the TRAFAC class translation factor GTPase superfamily. Classic translation factor GTPase family. EIF2G subfamily. In terms of assembly, heterotrimer composed of an alpha, a beta and a gamma chain. Mg(2+) serves as cofactor.

It carries out the reaction GTP + H2O = GDP + phosphate + H(+). Functionally, eIF-2 functions in the early steps of protein synthesis by forming a ternary complex with GTP and initiator tRNA. The polypeptide is Translation initiation factor 2 subunit gamma (Methanococcus maripaludis (strain C7 / ATCC BAA-1331)).